The primary structure comprises 301 residues: F-actin-capping protein subunit beta (301 aa).

Position 31 is a phosphoserine (S31). Position 264 is an N6-acetyllysine (K264).

Belongs to the F-actin-capping protein beta subunit family. Component of the F-actin capping complex, composed of a heterodimer of an alpha and a beta subunit. Subunit of dynactin, a multiprotein complex part of a tripartite complex with dynein and a adapter, such as BICDL1, BICD2 or HOOK3. The dynactin complex is built around ACTR1A/ACTB filament and consists of an actin-related filament composed of a shoulder domain, a pointed end and a barbed end. Its length is defined by its flexible shoulder domain. The soulder is composed of 2 DCTN1 subunits, 4 DCTN2 and 2 DCTN3. The 4 DCNT2 (via N-terminus) bind the ACTR1A filament and act as molecular rulers to determine the length. The pointed end is important for binding dynein-dynactin cargo adapters. Consists of 4 subunits: ACTR10, DCNT4, DCTN5 and DCTN6. The barbed end is composed of a CAPZA1:CAPZB heterodimers, which binds ACTR1A/ACTB filament and dynactin and stabilizes dynactin. Interacts with ARHGAP17. Interaction with RCSD1/CAPZIP. Component of the WASH complex, composed of F-actin-capping protein subunit alpha (CAPZA1, CAPZA2 or CAPZA3), F-actin-capping protein subunit beta (CAPZB), WASH (WASHC1, WASH2P, WASH3P, WASH4P, WASH5P or WASH6P), WASHC2 (WASHC2A or WASHC2C), WASHC3, WASHC4 and WASHC5. Interacts with ACTG1. Directly interacts with CRACD; this interaction decreases binding to actin. As to expression, the isoform beta-3 is predominantly expressed in the testis. It is only detected in total sperm, sperm heads and the calyx fraction, but not in sperm tails or any supernatant fraction. Weaker expression also found in brain.

The protein resides in the cytoplasm. Its subcellular location is the cytoskeleton. It localises to the perinuclear theca. The protein localises to the calyx. Its function is as follows. F-actin-capping proteins bind in a Ca(2+)-independent manner to the fast growing ends of actin filaments (barbed end) thereby blocking the exchange of subunits at these ends. Unlike other capping proteins (such as gelsolin and severin), these proteins do not sever actin filaments. Plays a role in the regulation of cell morphology and cytoskeletal organization. Forms, with CAPZB, the barbed end of the fast growing ends of actin filaments in the dynactin complex and stabilizes dynactin structure. The dynactin multiprotein complex activates the molecular motor dynein for ultra-processive transport along microtubules. The chain is F-actin-capping protein subunit beta (CAPZB) from Bos taurus (Bovine).